The sequence spans 146 residues: Putative type II restriction enzyme MjaORF1200P (146 aa).

It to A.pernix APE2001.

The catalysed reaction is Endonucleolytic cleavage of DNA to give specific double-stranded fragments with terminal 5'-phosphates.. In terms of biological role, a putative type II restriction enzyme, its methylase would be M.MjaORF1200P (AC Q58600). This is Putative type II restriction enzyme MjaORF1200P from Methanocaldococcus jannaschii (strain ATCC 43067 / DSM 2661 / JAL-1 / JCM 10045 / NBRC 100440) (Methanococcus jannaschii).